The primary structure comprises 1025 residues: Multidrug resistance protein MdtC (1025 aa).

A run of 12 helical transmembrane segments spans residues 3-23, 333-353, 360-380, 387-407, 431-451, 463-483, 528-548, 853-873, 875-895, 897-917, 953-973, and 984-1004; these read FFALFIYRPVATILLSVAITL, EVEQTLIISVALVILVVFLFL, IIPAVSVPVSLIGTFAAMYLC, LSLMALTIATGFVVDDAIVVL, VGFTVLSMSLSLVAVFLPLLL, FAVTLSVAIGISLLVSLTLTP, LVGVVLLGTIALNIWLYISIP, VILIIAAIATVYIVLGILYES, VHPLTILSTLPSAGVGALLAL, LFNAPFSLIALIGIMLLIGIV, PIMMTTLAALFGALPLVLSGG, and ITIVGGLVMSQLLTLYTTPVV.

It belongs to the resistance-nodulation-cell division (RND) (TC 2.A.6) family. MdtC subfamily. Part of a tripartite efflux system composed of MdtA, MdtB and MdtC. MdtC forms a heteromultimer with MdtB.

It is found in the cell inner membrane. Its function is as follows. The MdtABC tripartite complex confers resistance against novobiocin and deoxycholate. The sequence is that of Multidrug resistance protein MdtC from Escherichia coli (strain ATCC 8739 / DSM 1576 / NBRC 3972 / NCIMB 8545 / WDCM 00012 / Crooks).